The following is a 214-amino-acid chain: Small ribosomal subunit protein uS3c (214 aa).

A KH type-2 domain is found at 39 to 111 (IRTYIHTISK…QLTINVLEVE (73 aa)).

Belongs to the universal ribosomal protein uS3 family. In terms of assembly, part of the 30S ribosomal subunit.

The protein resides in the plastid. Its subcellular location is the chloroplast. The polypeptide is Small ribosomal subunit protein uS3c (rps3) (Phaeodactylum tricornutum (strain CCAP 1055/1)).